Here is a 1479-residue protein sequence, read N- to C-terminus: Chromosome partition protein MukB (1479 aa).

Position 34-41 (34-41) interacts with ATP; that stretch reads GGNGAGKS. Coiled coils occupy residues 337–418, 511–603, 780–810, 847–1116, and 1206–1265; these read LNLV…QYQQ, QAER…RAPV, RAAR…DVQK, ELDR…AKAG, and DDPV…LQAV. Residues 666-783 are flexible hinge; it reads PGGSEDPRLN…EVPLFGRAAR (118 aa).

Belongs to the SMC family. MukB subfamily. In terms of assembly, homodimerization via its hinge domain. Binds to DNA via its C-terminal region. Interacts, and probably forms a ternary complex, with MukE and MukF via its C-terminal region. The complex formation is stimulated by calcium or magnesium. Interacts with tubulin-related protein FtsZ.

It is found in the cytoplasm. The protein resides in the nucleoid. Plays a central role in chromosome condensation, segregation and cell cycle progression. Functions as a homodimer, which is essential for chromosome partition. Involved in negative DNA supercoiling in vivo, and by this means organize and compact chromosomes. May achieve or facilitate chromosome segregation by condensation DNA from both sides of a centrally located replisome during cell division. The protein is Chromosome partition protein MukB of Pectobacterium carotovorum subsp. carotovorum (strain PC1).